We begin with the raw amino-acid sequence, 552 residues long: Chaperonin GroEL (552 aa).

ATP-binding positions include threonine 30–proline 33, lysine 51, aspartate 87–threonine 91, glycine 415, asparagine 479–alanine 481, and aspartate 495.

This sequence belongs to the chaperonin (HSP60) family. Forms a cylinder of 14 subunits composed of two heptameric rings stacked back-to-back. Interacts with the co-chaperonin GroES.

The protein resides in the cytoplasm. The catalysed reaction is ATP + H2O + a folded polypeptide = ADP + phosphate + an unfolded polypeptide.. In terms of biological role, together with its co-chaperonin GroES, plays an essential role in assisting protein folding. The GroEL-GroES system forms a nano-cage that allows encapsulation of the non-native substrate proteins and provides a physical environment optimized to promote and accelerate protein folding. In Nitrosospira multiformis (strain ATCC 25196 / NCIMB 11849 / C 71), this protein is Chaperonin GroEL.